Reading from the N-terminus, the 364-residue chain is tRNA 2-selenouridine synthase (364 aa).

One can recognise a Rhodanese domain in the interval 14-137 (LLADTPLIDV…LRQTAIQATW (124 aa)). The active-site S-selanylcysteine intermediate is Cys-97. Gly-149 serves as a coordination point for (2E)-geranyl diphosphate.

The protein belongs to the SelU family. In terms of assembly, monomer.

It catalyses the reaction 5-methylaminomethyl-2-thiouridine(34) in tRNA + selenophosphate + (2E)-geranyl diphosphate + H2O + H(+) = 5-methylaminomethyl-2-selenouridine(34) in tRNA + (2E)-thiogeraniol + phosphate + diphosphate. The catalysed reaction is 5-methylaminomethyl-2-thiouridine(34) in tRNA + (2E)-geranyl diphosphate = 5-methylaminomethyl-S-(2E)-geranyl-thiouridine(34) in tRNA + diphosphate. The enzyme catalyses 5-methylaminomethyl-S-(2E)-geranyl-thiouridine(34) in tRNA + selenophosphate + H(+) = 5-methylaminomethyl-2-(Se-phospho)selenouridine(34) in tRNA + (2E)-thiogeraniol. It carries out the reaction 5-methylaminomethyl-2-(Se-phospho)selenouridine(34) in tRNA + H2O = 5-methylaminomethyl-2-selenouridine(34) in tRNA + phosphate. In terms of biological role, involved in the post-transcriptional modification of the uridine at the wobble position (U34) of tRNA(Lys), tRNA(Glu) and tRNA(Gln). Catalyzes the conversion of 2-thiouridine (S2U-RNA) to 2-selenouridine (Se2U-RNA). Acts in a two-step process involving geranylation of 2-thiouridine (S2U) to S-geranyl-2-thiouridine (geS2U) and subsequent selenation of the latter derivative to 2-selenouridine (Se2U) in the tRNA chain. The protein is tRNA 2-selenouridine synthase of Salmonella typhimurium (strain LT2 / SGSC1412 / ATCC 700720).